The following is a 166-amino-acid chain: Short form salivary protein D7R5 (166 aa).

Positions 1-22 (MEWRYFVVIALICPLIIVETLA) are cleaved as a signal peptide. Cystine bridges form between Cys-26-Cys-58, Cys-39-Cys-166, and Cys-98-Cys-117.

Belongs to the PBP/GOBP family.

It localises to the secreted. In terms of biological role, in contrast to the related D7 salivary proteins, does not bind biogenic amines such as serotonin, noradrenaline, histamine and adrenaline. It is hypothesized that either D7r5 evolved an as yet unknown function or is becoming a pseudogene. This Anopheles gambiae (African malaria mosquito) protein is Short form salivary protein D7R5.